The sequence spans 249 residues: Metallo-beta-lactamase type 2 (249 aa).

The first 22 residues, Met1–Gly22, serve as a signal peptide directing secretion. The Zn(2+) site is built by His98, His100, Asp102, His161, and Cys180. Lys183 is a substrate binding site. His222 contacts Zn(2+).

It belongs to the metallo-beta-lactamase superfamily. Class-B beta-lactamase family. Monomer. It depends on Zn(2+) as a cofactor.

It localises to the periplasm. It catalyses the reaction a beta-lactam + H2O = a substituted beta-amino acid. Functionally, confers resistance to the different beta-lactams antibiotics (penicillin, cephalosporin and carbapenem) via the hydrolysis of the beta-lactam ring. The protein is Metallo-beta-lactamase type 2 (blaB4) of Elizabethkingia meningoseptica (Chryseobacterium meningosepticum).